The chain runs to 259 residues: uncharacterized protein (259 aa).

Positions 1–19 form a signal peptide, or 26; it reads MKLSVKIAGVLTVAAAAMT. 214 to 221 lines the ATP pocket; sequence GPYELGKT.

This is an uncharacterized protein from Bacillus subtilis (strain 168).